The chain runs to 202 residues: Large ribosomal subunit protein bL25 (202 aa).

This sequence belongs to the bacterial ribosomal protein bL25 family. CTC subfamily. In terms of assembly, part of the 50S ribosomal subunit; part of the 5S rRNA/L5/L18/L25 subcomplex. Contacts the 5S rRNA. Binds to the 5S rRNA independently of L5 and L18.

Functionally, this is one of the proteins that binds to the 5S RNA in the ribosome where it forms part of the central protuberance. This chain is Large ribosomal subunit protein bL25, found in Nitrosomonas eutropha (strain DSM 101675 / C91 / Nm57).